The sequence spans 526 residues: piRNA biogenesis factor prde-1 (526 aa).

Positions 436–526 (EAKEEPIDKK…RRRGCEIRRK (91 aa)) are disordered. The segment covering 439 to 448 (EEPIDKKKDP) has biased composition (basic and acidic residues). The segment covering 458–467 (GKKRRGRKPK) has biased composition (basic residues). Basic and acidic residues predominate over residues 468 to 487 (KKDDPKMELKDEVKDLKDFV). The span at 489 to 498 (EESTSASSSA) shows a compositional bias: low complexity.

In terms of tissue distribution, expressed in male and female germ cells.

It localises to the nucleus. The protein localises to the chromosome. Its function is as follows. Nuclear factor required for the production of piwi-interacting RNA (piRNA) precursors. Specifically required for piRNAs produced from loci associated with the Ruby motif. Promotes binding of the transcription factor snpc-4 at piRNA genomic clusters. Required for normal fertility. This chain is piRNA biogenesis factor prde-1, found in Caenorhabditis elegans.